The following is a 156-amino-acid chain: Small ribosomal subunit protein uS7 (156 aa).

Belongs to the universal ribosomal protein uS7 family. As to quaternary structure, part of the 30S ribosomal subunit. Contacts proteins S9 and S11.

In terms of biological role, one of the primary rRNA binding proteins, it binds directly to 16S rRNA where it nucleates assembly of the head domain of the 30S subunit. Is located at the subunit interface close to the decoding center, probably blocks exit of the E-site tRNA. The protein is Small ribosomal subunit protein uS7 of Yersinia enterocolitica serotype O:8 / biotype 1B (strain NCTC 13174 / 8081).